A 317-amino-acid chain; its full sequence is Methionyl-tRNA formyltransferase (317 aa).

Position 112–115 (serine 112–proline 115) interacts with (6S)-5,6,7,8-tetrahydrofolate.

The protein belongs to the Fmt family.

The catalysed reaction is L-methionyl-tRNA(fMet) + (6R)-10-formyltetrahydrofolate = N-formyl-L-methionyl-tRNA(fMet) + (6S)-5,6,7,8-tetrahydrofolate + H(+). Functionally, attaches a formyl group to the free amino group of methionyl-tRNA(fMet). The formyl group appears to play a dual role in the initiator identity of N-formylmethionyl-tRNA by promoting its recognition by IF2 and preventing the misappropriation of this tRNA by the elongation apparatus. This is Methionyl-tRNA formyltransferase from Histophilus somni (strain 2336) (Haemophilus somnus).